Reading from the N-terminus, the 460-residue chain is tRNA modification GTPase MnmE (460 aa).

Positions 29, 86, and 126 each coordinate (6S)-5-formyl-5,6,7,8-tetrahydrofolate. A TrmE-type G domain is found at 222 to 383 (GMRVVIAGRP…LAEHLKECMG (162 aa)). Asn232 provides a ligand contact to K(+). Residues 232–237 (NAGKSS), 251–257 (TAIAGTT), 276–279 (DTAG), and 341–344 (NKAD) each bind GTP. Position 236 (Ser236) interacts with Mg(2+). The K(+) site is built by Thr251, Ile253, and Thr256. Residue Thr257 coordinates Mg(2+). Lys460 contributes to the (6S)-5-formyl-5,6,7,8-tetrahydrofolate binding site.

This sequence belongs to the TRAFAC class TrmE-Era-EngA-EngB-Septin-like GTPase superfamily. TrmE GTPase family. In terms of assembly, homodimer. Heterotetramer of two MnmE and two MnmG subunits. Requires K(+) as cofactor.

It is found in the cytoplasm. Exhibits a very high intrinsic GTPase hydrolysis rate. Involved in the addition of a carboxymethylaminomethyl (cmnm) group at the wobble position (U34) of certain tRNAs, forming tRNA-cmnm(5)s(2)U34. The chain is tRNA modification GTPase MnmE from Pseudoalteromonas atlantica (strain T6c / ATCC BAA-1087).